The chain runs to 156 residues: Small ribosomal subunit protein uS7 (156 aa).

Belongs to the universal ribosomal protein uS7 family. In terms of assembly, part of the 30S ribosomal subunit. Contacts proteins S9 and S11.

Functionally, one of the primary rRNA binding proteins, it binds directly to 16S rRNA where it nucleates assembly of the head domain of the 30S subunit. Is located at the subunit interface close to the decoding center, probably blocks exit of the E-site tRNA. This chain is Small ribosomal subunit protein uS7, found in Actinobacillus pleuropneumoniae serotype 5b (strain L20).